A 262-amino-acid chain; its full sequence is Outer dense fiber protein 1 (262 aa).

Phosphoserine is present on residues serine 5 and serine 10. Copy 1 of the repeat occupies 34–38 (RCLCD). Positions 34–77 (RCLCDLYMHPYCCCDLHPYPYCLCYSKRSRSCGLCDLYPCCLCD) are 2 X 5 AA repeats of [RC]-C-L-C-D. Serine 64 is modified (phosphoserine). Residues 73–77 (CCLCD) form repeat 2. Phosphoserine is present on residues serine 86, serine 122, serine 123, serine 151, serine 167, serine 189, and serine 194. The tract at residues 209-250 (CNPCNPCSPCNPCNPCNPCNPCSPCSPCSPCNPCDPCNPCYP) is C-X-P repeat region.

Interacts (via leucine zipper motif) with TCP11. Interacts with SPAG4. Interacts with KLC3. Interacts with CCDC42.

It localises to the cell projection. Its subcellular location is the cilium. The protein resides in the flagellum. It is found in the cytoplasm. The protein localises to the cytoskeleton. It localises to the microtubule organizing center. Its subcellular location is the centrosome. Component of the outer dense fibers (ODF) of spermatozoa. ODF are filamentous structures located on the outside of the axoneme in the midpiece and principal piece of the mammalian sperm tail and may help to maintain the passive elastic structures and elastic recoil of the sperm tail. This is Outer dense fiber protein 1 (ODF1) from Sus scrofa (Pig).